A 215-amino-acid chain; its full sequence is GTP-binding nuclear protein ran-1 (215 aa).

Residues 6–170 (GIPTFKLVLV…LWLARKLLGD (165 aa)) enclose the Small GTPase Ran-type domain. 17-24 (DGGTGKTT) serves as a coordination point for GTP. The interval 36–44 (KKYVATLGV) is switch-I. GTP contacts are provided by residues Gly67, 121-124 (NKVD), and 149-151 (SAK). Residues 67–83 (GQEKFGGLRDGYYIQGQ) form a switch-II region.

Belongs to the small GTPase superfamily. Ran family. As to quaternary structure, found in a nuclear export complex with RanGTP, exportin and pre-miRNA.

The protein resides in the nucleus. The protein localises to the chromosome. It localises to the centromere. It is found in the kinetochore. Functionally, ran GTPase system comprises ran-1, ran-2 and ran-3 and is essential in nucleocytoplasmic transport. Ran-1 is a GTP-binding protein that mediates the interaction between mitotic chromosomes and kinetochore microtubules. Plays a crucial role in nuclear envelope assembly at the end of each cell division. Required for the import of protein into the nucleus and also for RNA export. RCC1 (ran-3)/Ran (ran-1) complex (together with other proteins) acts as a component of a signal transmission pathway that detects unreplicated DNA. This chain is GTP-binding nuclear protein ran-1 (ran-1), found in Caenorhabditis elegans.